A 315-amino-acid polypeptide reads, in one-letter code: MKLLIIKIDTSQEVEDALSIYAMDNLNALGVESRNRSDFEQAGWLHDSTVVDMDDIKDLPKDTYFYAYFDEEADRDELVKKFQDKMQELKGYGLNIGDAKITTSYIEDQDWNTAWQKYYHVINFSRHLAIVPKWEDYKPAFKDQQLIKLDPGLAFGTGNHKTTQLAMMGLERAIVKKPISVVDVGTGSGILAIAASKLGATDILATDISDESMTATEQNSALNDIKNIRVQKTSLLADVDGKFDIIVANILAEILLELIPQMDAHLNEGGQVIFSGIDYLQLPKIEKSLDENGFKIDLTMKQGRWVGLAITRKEK.

T163, G185, D207, and N249 together coordinate S-adenosyl-L-methionine.

Belongs to the methyltransferase superfamily. PrmA family.

It localises to the cytoplasm. It catalyses the reaction L-lysyl-[protein] + 3 S-adenosyl-L-methionine = N(6),N(6),N(6)-trimethyl-L-lysyl-[protein] + 3 S-adenosyl-L-homocysteine + 3 H(+). Methylates ribosomal protein L11. This Lactobacillus helveticus (strain DPC 4571) protein is Ribosomal protein L11 methyltransferase.